A 1187-amino-acid polypeptide reads, in one-letter code: DNA-directed RNA polymerase subunit beta (1187 aa).

Residues 1150 to 1187 form a disordered region; sequence KDEDDDPASSADDLGFNIGARPDAAAKEDQKAEEPEYQ. Residues 1173-1187 show a composition bias toward basic and acidic residues; it reads AAAKEDQKAEEPEYQ.

It belongs to the RNA polymerase beta chain family. In terms of assembly, the RNAP catalytic core consists of 2 alpha, 1 beta, 1 beta' and 1 omega subunit. When a sigma factor is associated with the core the holoenzyme is formed, which can initiate transcription.

It catalyses the reaction RNA(n) + a ribonucleoside 5'-triphosphate = RNA(n+1) + diphosphate. Functionally, DNA-dependent RNA polymerase catalyzes the transcription of DNA into RNA using the four ribonucleoside triphosphates as substrates. The chain is DNA-directed RNA polymerase subunit beta from Bifidobacterium longum subsp. infantis (strain ATCC 15697 / DSM 20088 / JCM 1222 / NCTC 11817 / S12).